We begin with the raw amino-acid sequence, 612 residues long: Dihydroxy-acid dehydratase (612 aa).

Asp-81 lines the Mg(2+) pocket. Cys-122 provides a ligand contact to [2Fe-2S] cluster. Asp-123 and Lys-124 together coordinate Mg(2+). Lys-124 carries the N6-carboxylysine modification. Residue Cys-195 participates in [2Fe-2S] cluster binding. Glu-491 serves as a coordination point for Mg(2+). The active-site Proton acceptor is the Ser-517.

It belongs to the IlvD/Edd family. As to quaternary structure, homodimer. [2Fe-2S] cluster is required as a cofactor. The cofactor is Mg(2+).

The enzyme catalyses (2R)-2,3-dihydroxy-3-methylbutanoate = 3-methyl-2-oxobutanoate + H2O. The catalysed reaction is (2R,3R)-2,3-dihydroxy-3-methylpentanoate = (S)-3-methyl-2-oxopentanoate + H2O. It functions in the pathway amino-acid biosynthesis; L-isoleucine biosynthesis; L-isoleucine from 2-oxobutanoate: step 3/4. The protein operates within amino-acid biosynthesis; L-valine biosynthesis; L-valine from pyruvate: step 3/4. Functions in the biosynthesis of branched-chain amino acids. Catalyzes the dehydration of (2R,3R)-2,3-dihydroxy-3-methylpentanoate (2,3-dihydroxy-3-methylvalerate) into 2-oxo-3-methylpentanoate (2-oxo-3-methylvalerate) and of (2R)-2,3-dihydroxy-3-methylbutanoate (2,3-dihydroxyisovalerate) into 2-oxo-3-methylbutanoate (2-oxoisovalerate), the penultimate precursor to L-isoleucine and L-valine, respectively. This chain is Dihydroxy-acid dehydratase, found in Sinorhizobium medicae (strain WSM419) (Ensifer medicae).